The following is a 698-amino-acid chain: Sucrose non-fermenting protein kinase 1 (698 aa).

The disordered stretch occupies residues 1-48 (MAPRGFEDEELTISLSSSHVRRPQQQQPPPPTQQQHAHQPGSRPADAP). The Protein kinase domain occupies 62–313 (YKVLRTLGEG…IEDIRADPWF (252 aa)). Residues 68–76 (LGEGSFGKV) and Lys91 each bind ATP. Asp184 (proton acceptor) is an active-site residue. An auto-inhibitory domain (AID) region spans residues 320 to 417 (YLQLPVEEFF…ALLEPEGSSP (98 aa)). In terms of domain architecture, UBA spans 360–397 (VTEKISKTMGYGKNDVEEALQASEPSAIKDAYMIVREN). 3 disordered regions span residues 410 to 435 (LEPEGSSPMLSMSSARSATSTTTTTA), 482 to 525 (TRTD…KKTK), and 564 to 597 (ESRHAEERAEASGNGSFADSYDGSRGSTTSIDPM). Residues 415-435 (SSPMLSMSSARSATSTTTTTA) are compositionally biased toward low complexity. Basic and acidic residues-rich tracts occupy residues 484–493 (TDAEKEETSR) and 564–573 (ESRHAEERAE).

It belongs to the protein kinase superfamily. CAMK Ser/Thr protein kinase family. SNF1 subfamily. As to quaternary structure, component of the AMP-activated protein kinase complex also known as the SNF1 kinase complex (Snf1c), a heterotrimeric complex composed of a catalytic subunit alpha and 2 regulatory subunits beta and gamma.

The protein resides in the cytoplasm. The protein localises to the nucleus. It catalyses the reaction L-seryl-[protein] + ATP = O-phospho-L-seryl-[protein] + ADP + H(+). It carries out the reaction L-threonyl-[protein] + ATP = O-phospho-L-threonyl-[protein] + ADP + H(+). Functionally, catalytic subunit of the AMP-activated protein kinase complex also known as the SNF1 kinase complex (Snf1c), a central regulator of cellular energy homeostasis, which, in response to a fall in intracellular ATP levels, activates energy-producing pathways and inhibits energy-consuming processes. The complex phosphorylates histone H3 to form H3S10ph, which promotes H3K14ac formation, leading to transcriptional activation through TBP recruitment to the promoters. Activates the expression of the galactose oxidase (GOA) gene and of several cell wall-degrading enzymes (CWDEs) such as pectate lyase, xylanase and glucanase. Plays an important role in sudden death syndrome (SDS) by controlling the colonization of the infected roots. The chain is Sucrose non-fermenting protein kinase 1 from Fusarium virguliforme.